The chain runs to 135 residues: MATFQFDLVSPEKLAFSGQVDQVDIPGVEGDFGVLAGHAPVVAVIRPGLLTITAGGNQQKIVVLGGLAEVSDKGLTVLADVATSVAELDTAQFAQTISSMESSLAGKQGSELDRAIERLDHYKSIQHQLNATAMH.

This sequence belongs to the ATPase epsilon chain family. F-type ATPases have 2 components, CF(1) - the catalytic core - and CF(0) - the membrane proton channel. CF(1) has five subunits: alpha(3), beta(3), gamma(1), delta(1), epsilon(1). CF(0) has three main subunits: a, b and c.

It localises to the cell inner membrane. Its function is as follows. Produces ATP from ADP in the presence of a proton gradient across the membrane. The polypeptide is ATP synthase epsilon chain (Rhodopseudomonas palustris (strain BisB18)).